Here is a 197-residue protein sequence, read N- to C-terminus: Phosphoheptose isomerase (197 aa).

The SIS domain occupies 37–197 (MLQCLMNDGK…CIDSVLLEGM (161 aa)). Substrate is bound at residue 52–54 (NGG). The Zn(2+) site is built by H61 and E65. Substrate-binding positions include E65, 94–95 (ND), 120–122 (STS), S125, and Q175. Residues Q175 and H183 each contribute to the Zn(2+) site.

It belongs to the SIS family. GmhA subfamily. In terms of assembly, homotetramer. Requires Zn(2+) as cofactor.

It is found in the cytoplasm. It catalyses the reaction 2 D-sedoheptulose 7-phosphate = D-glycero-alpha-D-manno-heptose 7-phosphate + D-glycero-beta-D-manno-heptose 7-phosphate. It functions in the pathway carbohydrate biosynthesis; D-glycero-D-manno-heptose 7-phosphate biosynthesis; D-glycero-alpha-D-manno-heptose 7-phosphate and D-glycero-beta-D-manno-heptose 7-phosphate from sedoheptulose 7-phosphate: step 1/1. It participates in bacterial outer membrane biogenesis; LOS core biosynthesis. Functionally, catalyzes the isomerization of sedoheptulose 7-phosphate in D-glycero-D-manno-heptose 7-phosphate. This Neisseria meningitidis serogroup A / serotype 4A (strain DSM 15465 / Z2491) protein is Phosphoheptose isomerase.